A 342-amino-acid chain; its full sequence is Heat-inducible transcription repressor HrcA (342 aa).

Belongs to the HrcA family.

Negative regulator of class I heat shock genes (grpE-dnaK-dnaJ and groELS operons). Prevents heat-shock induction of these operons. The polypeptide is Heat-inducible transcription repressor HrcA (Acholeplasma laidlawii).